A 390-amino-acid polypeptide reads, in one-letter code: ATP-sensitive inward rectifier potassium channel 11 (390 aa).

The Cytoplasmic portion of the chain corresponds to 1 to 65 (MLSRKGIIPE…LQDVFTTLVD (65 aa)). ATP-binding residues include asparagine 48 and arginine 50. The chain crosses the membrane as a helical span at residues 66–92 (LKWTHTLLIFTMSFLCSWLLFAMVWWL). At 93-116 (IAFAHGDLAPGEGAAVPCVTSIHS) the chain is on the extracellular side. Cysteine 110 and cysteine 142 form a disulfide bridge. Residues 117–133 (FSSAFLFSIEVQVTIGF) constitute an intramembrane region (discontinuously helical; Pore-forming). Threonine 130 and phenylalanine 133 together coordinate K(+). Residues 130-135 (TIGFGG) carry the Selectivity filter motif. At 134–142 (GGRMVTEEC) the chain is on the extracellular side. A helical membrane pass occupies residues 143–171 (PLAILILIVQNIVGLMINAIMLGCIFMKT). Residues 172 to 390 (AQAHRRAETL…KFSISPDSLS (219 aa)) are Cytoplasmic-facing. A 1,2-diacyl-sn-glycero-3-phospho-(1D-myo-inositol-4,5-bisphosphate) is bound at residue arginine 176. Residue tyrosine 330 participates in ATP binding. Position 341 is a phosphothreonine; by MAPK1 (threonine 341). Serine 385 carries the phosphoserine; by MAPK1 modification.

This sequence belongs to the inward rectifier-type potassium channel (TC 1.A.2.1) family. KCNJ11 subfamily. In terms of assembly, homotetramer; the homotetramer binds four ATP molecules (one ATP per subunit). Forms an heterooctamer with ABCC8/SUR1; one KCNJ11 homotetramer interacts with four ABCC8/SUR1 molecules. Interacts with ABCC9/SUR2. In terms of processing, phosphorylation by MAPK1 results in changes in channel gating that destabilize the closed states and reduce the ATP sensitivity.

It is found in the membrane. The enzyme catalyses K(+)(in) = K(+)(out). With respect to regulation, KATP channels are regulated by cytoplasmic ATP/ADP ratios; ATP inhibits the channel by closing the pore, while ADP activates the channel. Activated by phosphatidylinositol 4,5-biphosphate (PtdIns(4,5)P2). Inward rectifier potassium channel that forms the pore of ATP-sensitive potassium channels (KATP), regulating potassium permeability as a function of cytoplasmic ATP and ADP concentrations in many different cells. Inward rectifier potassium channels are characterized by a greater tendency to allow potassium to flow into the cell rather than out of it. Their voltage dependence is regulated by the concentration of extracellular potassium; as external potassium is raised, the voltage range of the channel opening shifts to more positive voltages. The inward rectification is mainly due to the blockage of outward current by internal magnesium. Can be blocked by extracellular barium. In pancreatic cells, it forms KATP channels with ABCC8/SUR1. Can form cardiac and smooth muscle-type KATP channels with ABCC9. This Oryctolagus cuniculus (Rabbit) protein is ATP-sensitive inward rectifier potassium channel 11 (KCNJ11).